Here is a 269-residue protein sequence, read N- to C-terminus: Hydroxyethylthiazole kinase (269 aa).

Met41 contributes to the substrate binding site. ATP-binding residues include Arg117 and Ser163. Gly190 contributes to the substrate binding site.

This sequence belongs to the Thz kinase family. Requires Mg(2+) as cofactor.

The catalysed reaction is 5-(2-hydroxyethyl)-4-methylthiazole + ATP = 4-methyl-5-(2-phosphooxyethyl)-thiazole + ADP + H(+). It participates in cofactor biosynthesis; thiamine diphosphate biosynthesis; 4-methyl-5-(2-phosphoethyl)-thiazole from 5-(2-hydroxyethyl)-4-methylthiazole: step 1/1. In terms of biological role, catalyzes the phosphorylation of the hydroxyl group of 4-methyl-5-beta-hydroxyethylthiazole (THZ). The protein is Hydroxyethylthiazole kinase of Latilactobacillus sakei subsp. sakei (strain 23K) (Lactobacillus sakei subsp. sakei).